The sequence spans 472 residues: tRNA-2-methylthio-N(6)-dimethylallyladenosine synthase (472 aa).

The interval 1–24 (MTGTPDVFPPATPGGAPLVALPAG) is disordered. The MTTase N-terminal domain occupies 33-150 (GKLYIKTHGC…LPELIRARRE (118 aa)). The [4Fe-4S] cluster site is built by cysteine 42, cysteine 79, cysteine 113, cysteine 187, cysteine 191, and cysteine 194. Positions 173–407 (RAEGASAFVS…RINAHAAGIS (235 aa)) constitute a Radical SAM core domain. Residues 408 to 471 (EKMVGTVQTV…TNSLRARVVA (64 aa)) form the TRAM domain.

This sequence belongs to the methylthiotransferase family. MiaB subfamily. In terms of assembly, monomer. [4Fe-4S] cluster is required as a cofactor.

It localises to the cytoplasm. It catalyses the reaction N(6)-dimethylallyladenosine(37) in tRNA + (sulfur carrier)-SH + AH2 + 2 S-adenosyl-L-methionine = 2-methylsulfanyl-N(6)-dimethylallyladenosine(37) in tRNA + (sulfur carrier)-H + 5'-deoxyadenosine + L-methionine + A + S-adenosyl-L-homocysteine + 2 H(+). Its function is as follows. Catalyzes the methylthiolation of N6-(dimethylallyl)adenosine (i(6)A), leading to the formation of 2-methylthio-N6-(dimethylallyl)adenosine (ms(2)i(6)A) at position 37 in tRNAs that read codons beginning with uridine. In Stenotrophomonas maltophilia (strain K279a), this protein is tRNA-2-methylthio-N(6)-dimethylallyladenosine synthase.